The following is a 408-amino-acid chain: MPIKILMPALSPTMREGNLARWLKKEGDKVNPGEVIAEIETDKATMEVESVDEGILAKIIIPQNSQNVPVNSLIAVLSEEGEDKADIDSFIAQNNSVSLSLKTDATLKKSNDSITNVEGIKHDSNKIFASPLAKRLAKIGDIRLENVQGSGPHGRIVKQDILSYDSSTSSNKIVYRDTEEYRSVPNNNIRKIIAKRLLESKQTVPHFYLSIECNVDKLLDVREDINKSFSEDKVTKISVNDFIILAVAKALQEVPNANASWSEDAIRYYNNVDISVAVAIENGIVTPIVKDANKKNIIELSREMKTLIKKAKDNKLTPIEFQGGGFTISNLGMYGIKNFNAIINTPQSCIMGVGASTKRAIVKNDQIIIATIMDVTLSADHRVIDGAVSAEFLASFKRFIENPVLMLI.

The Lipoyl-binding domain occupies 2–78 (PIKILMPALS…PVNSLIAVLS (77 aa)). K43 bears the N6-lipoyllysine mark. Residues 128 to 165 (FASPLAKRLAKIGDIRLENVQGSGPHGRIVKQDILSYD) enclose the Peripheral subunit-binding (PSBD) domain. H381 is a catalytic residue.

Belongs to the 2-oxoacid dehydrogenase family. As to quaternary structure, forms a 24-polypeptide structural core with octahedral symmetry. (R)-lipoate is required as a cofactor.

It carries out the reaction N(6)-[(R)-dihydrolipoyl]-L-lysyl-[protein] + acetyl-CoA = N(6)-[(R)-S(8)-acetyldihydrolipoyl]-L-lysyl-[protein] + CoA. In terms of biological role, the pyruvate dehydrogenase complex catalyzes the overall conversion of pyruvate to acetyl-CoA and CO(2). It contains multiple copies of three enzymatic components: pyruvate dehydrogenase (E1), dihydrolipoamide acetyltransferase (E2) and lipoamide dehydrogenase (E3). In Rickettsia prowazekii (strain Madrid E), this protein is Dihydrolipoyllysine-residue acetyltransferase component of pyruvate dehydrogenase complex (pdhC).